The sequence spans 409 residues: uncharacterized protein (409 aa).

The region spanning 305–409 is the HTH arsR-type domain; it reads LTKIDEKVVK…LIGEDDELEM (105 aa).

This is an uncharacterized protein from Methanocaldococcus jannaschii (strain ATCC 43067 / DSM 2661 / JAL-1 / JCM 10045 / NBRC 100440) (Methanococcus jannaschii).